Consider the following 501-residue polypeptide: MGCARWLALGGLLALAGLLQARLLLPQQAGFGECDRFFYKGTPPAGLATEAHVRICQRFAGSERFATLYSPGHRIPVFSAFRAARPASRSAEQRGLLEPQIDDPDSNLEEVIDEANALTSVDNLGSKQALNADYIDSDYEIGQLYPFPLNSDLQMATFPLTNSVPMTQSFRERWHMNLNSLMDRALIPHCSEGKDLYILTGAVPSEHRVKGKVTIPEFVWLAACCAVPGEGWAMGFIKHTQDIDVIEDVMLRDLEKLLPHKPQLFQDNCGEMEQDTEKMKKILEVVNQVQDEERSLQSQERMSPLASTQSQRSALLSPEAPPEGGSSFLGQVLGFLATPFIKLFQLIYYLVTAVLRNIVHLLWLVAKQAINTVESCLYHLGEATVSYLVAIGQELVSIPWKVLKVVAKVIRAFLRILCCLLKAVCRALSIPLRVLVDVATFPVYTVGAIPIVCKDIAVGLGGTLSLLFDTAFGTVGGLFQIVFSVFKRIGYKVTLDNSGEF.

Positions 1 to 21 (MGCARWLALGGLLALAGLLQA) are cleaved as a signal peptide. Residue Lys-408 is modified to N6-acetyllysine.

It belongs to the DNA/RNA non-specific endonuclease family. Interacts with RNF26; this interaction is important to modulate innate immune signaling through the cGAS-STING pathway.

It is found in the secreted. Functionally, may act as a DNase and a RNase. Plays a role in the modulation of innate immune signaling through the cGAS-STING pathway by interacting with RNF26. The polypeptide is Endonuclease domain-containing 1 protein (Endod1) (Mus musculus (Mouse)).